Consider the following 227-residue polypeptide: 2-C-methyl-D-erythritol 4-phosphate cytidylyltransferase (227 aa).

Belongs to the IspD/TarI cytidylyltransferase family. IspD subfamily.

It catalyses the reaction 2-C-methyl-D-erythritol 4-phosphate + CTP + H(+) = 4-CDP-2-C-methyl-D-erythritol + diphosphate. It participates in isoprenoid biosynthesis; isopentenyl diphosphate biosynthesis via DXP pathway; isopentenyl diphosphate from 1-deoxy-D-xylulose 5-phosphate: step 2/6. Functionally, catalyzes the formation of 4-diphosphocytidyl-2-C-methyl-D-erythritol from CTP and 2-C-methyl-D-erythritol 4-phosphate (MEP). The chain is 2-C-methyl-D-erythritol 4-phosphate cytidylyltransferase from Bordetella parapertussis (strain 12822 / ATCC BAA-587 / NCTC 13253).